The following is a 360-amino-acid chain: Alkanal monooxygenase alpha chain (360 aa).

The protein belongs to the bacterial luciferase oxidoreductase family. Heterodimer of an alpha and a beta chain.

The enzyme catalyses a long-chain fatty aldehyde + FMNH2 + O2 = a long-chain fatty acid + hnu + FMN + H2O + 2 H(+). Light-emitting reaction in luminous bacteria. In Photorhabdus luminescens (Xenorhabdus luminescens), this protein is Alkanal monooxygenase alpha chain (luxA).